We begin with the raw amino-acid sequence, 391 residues long: Stearoyl-[acyl-carrier-protein] 9-desaturase 5, chloroplastic (391 aa).

Residues 1–20 (MAFAPSHTASPSYCGVAQGG) form a disordered region. The transit peptide at 1-32 (MAFAPSHTASPSYCGVAQGGRRSNGMSPVVAM) directs the protein to the chloroplast. Positions 133, 171, 174, 224, 257, and 260 each coordinate Fe cation.

Belongs to the fatty acid desaturase type 2 family. Homodimer. Requires Fe(2+) as cofactor.

The protein resides in the plastid. The protein localises to the chloroplast. It carries out the reaction octadecanoyl-[ACP] + 2 reduced [2Fe-2S]-[ferredoxin] + O2 + 2 H(+) = (9Z)-octadecenoyl-[ACP] + 2 oxidized [2Fe-2S]-[ferredoxin] + 2 H2O. It functions in the pathway lipid metabolism; fatty acid metabolism. Converts stearoyl-ACP to oleoyl-ACP by introduction of a cis double bond between carbons 9 and 10 of the acyl chain. The sequence is that of Stearoyl-[acyl-carrier-protein] 9-desaturase 5, chloroplastic from Oryza sativa subsp. indica (Rice).